Consider the following 520-residue polypeptide: Phosphoenolpyruvate carboxykinase (ATP) (520 aa).

The substrate site is built by Arg-61, Phe-196, and Lys-202. ATP contacts are provided by residues Lys-202, His-222, and 238–246 (GLSGTGKTT). Positions 202 and 222 each coordinate Mn(2+). Asp-259 provides a ligand contact to Mn(2+). ATP-binding positions include Glu-287, Arg-324, 443–444 (RI), and Thr-449. Residue Arg-324 participates in substrate binding.

Belongs to the phosphoenolpyruvate carboxykinase (ATP) family. Requires Mn(2+) as cofactor.

The protein resides in the cytoplasm. It carries out the reaction oxaloacetate + ATP = phosphoenolpyruvate + ADP + CO2. It participates in carbohydrate biosynthesis; gluconeogenesis. Its function is as follows. Involved in the gluconeogenesis. Catalyzes the conversion of oxaloacetate (OAA) to phosphoenolpyruvate (PEP) through direct phosphoryl transfer between the nucleoside triphosphate and OAA. The chain is Phosphoenolpyruvate carboxykinase (ATP) from Amoebophilus asiaticus (strain 5a2).